We begin with the raw amino-acid sequence, 156 residues long: SsrA-binding protein (156 aa).

It belongs to the SmpB family.

The protein localises to the cytoplasm. Functionally, required for rescue of stalled ribosomes mediated by trans-translation. Binds to transfer-messenger RNA (tmRNA), required for stable association of tmRNA with ribosomes. tmRNA and SmpB together mimic tRNA shape, replacing the anticodon stem-loop with SmpB. tmRNA is encoded by the ssrA gene; the 2 termini fold to resemble tRNA(Ala) and it encodes a 'tag peptide', a short internal open reading frame. During trans-translation Ala-aminoacylated tmRNA acts like a tRNA, entering the A-site of stalled ribosomes, displacing the stalled mRNA. The ribosome then switches to translate the ORF on the tmRNA; the nascent peptide is terminated with the 'tag peptide' encoded by the tmRNA and targeted for degradation. The ribosome is freed to recommence translation, which seems to be the essential function of trans-translation. The polypeptide is SsrA-binding protein (Paracoccus denitrificans (strain Pd 1222)).